Here is a 203-residue protein sequence, read N- to C-terminus: Small ribosomal subunit protein uS4 (203 aa).

The region spanning 93–156 (RRLDNVVYRL…LKVPAILEAV (64 aa)) is the S4 RNA-binding domain.

It belongs to the universal ribosomal protein uS4 family. In terms of assembly, part of the 30S ribosomal subunit. Contacts protein S5. The interaction surface between S4 and S5 is involved in control of translational fidelity.

One of the primary rRNA binding proteins, it binds directly to 16S rRNA where it nucleates assembly of the body of the 30S subunit. In terms of biological role, with S5 and S12 plays an important role in translational accuracy. This Streptococcus pneumoniae serotype 2 (strain D39 / NCTC 7466) protein is Small ribosomal subunit protein uS4.